The following is a 337-amino-acid chain: D-alanine--D-alanine ligase (337 aa).

The region spanning 124–330 (KMWFSALGIP…FTEYLSLVIN (207 aa)) is the ATP-grasp domain. 154–209 (ALANWGSIFIKAASQGSSVGCYKVDDSSKVAQVLKDAFGYAPYVVVEKTIKARELE) provides a ligand contact to ATP. Mg(2+) is bound by residues Asp284, Glu297, and Asn299.

Belongs to the D-alanine--D-alanine ligase family. It depends on Mg(2+) as a cofactor. Requires Mn(2+) as cofactor.

It localises to the cytoplasm. It catalyses the reaction 2 D-alanine + ATP = D-alanyl-D-alanine + ADP + phosphate + H(+). Its pathway is cell wall biogenesis; peptidoglycan biosynthesis. Its function is as follows. Cell wall formation. This Shewanella sp. (strain W3-18-1) protein is D-alanine--D-alanine ligase.